The following is a 477-amino-acid chain: Glycogen synthase (477 aa).

Lys15 contacts ADP-alpha-D-glucose.

This sequence belongs to the glycosyltransferase 1 family. Bacterial/plant glycogen synthase subfamily.

The enzyme catalyses [(1-&gt;4)-alpha-D-glucosyl](n) + ADP-alpha-D-glucose = [(1-&gt;4)-alpha-D-glucosyl](n+1) + ADP + H(+). It participates in glycan biosynthesis; glycogen biosynthesis. Its function is as follows. Synthesizes alpha-1,4-glucan chains using ADP-glucose. The sequence is that of Glycogen synthase (glgA) from Salmonella typhimurium (strain LT2 / SGSC1412 / ATCC 700720).